Consider the following 339-residue polypeptide: DNA-directed RNA polymerase subunit alpha (339 aa).

The interval 1 to 235 (MTIQKNWQEL…DQLNVFVNFE (235 aa)) is alpha N-terminal domain (alpha-NTD). The segment at 251–339 (FNPAFLKKVD…ELAKRFEDHY (89 aa)) is alpha C-terminal domain (alpha-CTD).

This sequence belongs to the RNA polymerase alpha chain family. In terms of assembly, homodimer. The RNAP catalytic core consists of 2 alpha, 1 beta, 1 beta' and 1 omega subunit. When a sigma factor is associated with the core the holoenzyme is formed, which can initiate transcription.

It catalyses the reaction RNA(n) + a ribonucleoside 5'-triphosphate = RNA(n+1) + diphosphate. DNA-dependent RNA polymerase catalyzes the transcription of DNA into RNA using the four ribonucleoside triphosphates as substrates. The sequence is that of DNA-directed RNA polymerase subunit alpha from Nitrobacter winogradskyi (strain ATCC 25391 / DSM 10237 / CIP 104748 / NCIMB 11846 / Nb-255).